Consider the following 177-residue polypeptide: Protein-export protein SecB (177 aa).

The protein belongs to the SecB family. In terms of assembly, homotetramer, a dimer of dimers. One homotetramer interacts with 1 SecA dimer.

The protein resides in the cytoplasm. Functionally, one of the proteins required for the normal export of preproteins out of the cell cytoplasm. It is a molecular chaperone that binds to a subset of precursor proteins, maintaining them in a translocation-competent state. It also specifically binds to its receptor SecA. The sequence is that of Protein-export protein SecB from Ehrlichia canis (strain Jake).